A 118-amino-acid chain; its full sequence is Large ribosomal subunit protein uL22 (118 aa).

This sequence belongs to the universal ribosomal protein uL22 family. In terms of assembly, part of the 50S ribosomal subunit.

Functionally, this protein binds specifically to 23S rRNA; its binding is stimulated by other ribosomal proteins, e.g. L4, L17, and L20. It is important during the early stages of 50S assembly. It makes multiple contacts with different domains of the 23S rRNA in the assembled 50S subunit and ribosome. In terms of biological role, the globular domain of the protein is located near the polypeptide exit tunnel on the outside of the subunit, while an extended beta-hairpin is found that lines the wall of the exit tunnel in the center of the 70S ribosome. The protein is Large ribosomal subunit protein uL22 of Thermomicrobium roseum (strain ATCC 27502 / DSM 5159 / P-2).